Here is a 365-residue protein sequence, read N- to C-terminus: Iron-sulfur cluster assembly protein SufC (365 aa).

In terms of domain architecture, ABC transporter spans 118–364 (LEINDLHAIE…ESDGYAQFVE (247 aa)). 152-159 (GRNGSGKS) provides a ligand contact to ATP.

It belongs to the ABC transporter superfamily. Ycf16 family. As to quaternary structure, component of a complex composed of SufB, SufC and SufD in a stoichiometric ratio of 1:2:1. Interacts with SufB. Interacts with SufD; the interaction enhances the ATPase activity of SufC.

It localises to the plastid. The protein resides in the apicoplast. The catalysed reaction is ATP + H2O = ADP + phosphate + H(+). It participates in cofactor biosynthesis; iron-sulfur cluster biosynthesis. In terms of biological role, participates in the sulfur mobilization (SUF) pathway for iron-sulfur (Fe-S) cluster biogenesis. As part of a complex consisting of SufB-SufC(2)-SufD, involved in assembly of [4Fe-4S] clusters. Exhibits ATPase activity. The protein is Iron-sulfur cluster assembly protein SufC of Plasmodium berghei (strain Anka).